Consider the following 376-residue polypeptide: Formate dehydrogenase 1 (376 aa).

Positions 97 and 121 each coordinate substrate. NAD(+) is bound by residues 176 to 177, Asp197, 244 to 248, Thr270, Asp296, and 325 to 328; these read RI, PLHKD, and HISG.

It belongs to the D-isomer specific 2-hydroxyacid dehydrogenase family. FDH subfamily. In terms of assembly, homodimer.

The protein localises to the cytoplasm. It catalyses the reaction formate + NAD(+) = CO2 + NADH. In terms of biological role, catalyzes the NAD(+)-dependent oxidation of formate to carbon dioxide. Formate oxidation is the final step in the methanol oxidation pathway in methylotrophic microorganisms. Has a role in the detoxification of exogenous formate in non-methylotrophic organisms. This Saccharomyces cerevisiae (strain YJM789) (Baker's yeast) protein is Formate dehydrogenase 1 (FDH1).